The chain runs to 141 residues: ATP synthase epsilon chain (141 aa).

The protein belongs to the ATPase epsilon chain family. F-type ATPases have 2 components, CF(1) - the catalytic core - and CF(0) - the membrane proton channel. CF(1) has five subunits: alpha(3), beta(3), gamma(1), delta(1), epsilon(1). CF(0) has three main subunits: a, b and c.

It localises to the cell inner membrane. Its function is as follows. Produces ATP from ADP in the presence of a proton gradient across the membrane. This chain is ATP synthase epsilon chain, found in Pseudomonas savastanoi pv. phaseolicola (strain 1448A / Race 6) (Pseudomonas syringae pv. phaseolicola (strain 1448A / Race 6)).